A 117-amino-acid chain; its full sequence is Large ribosomal subunit protein bL20 (117 aa).

Belongs to the bacterial ribosomal protein bL20 family.

Binds directly to 23S ribosomal RNA and is necessary for the in vitro assembly process of the 50S ribosomal subunit. It is not involved in the protein synthesizing functions of that subunit. The sequence is that of Large ribosomal subunit protein bL20 from Geobacter metallireducens (strain ATCC 53774 / DSM 7210 / GS-15).